A 207-amino-acid chain; its full sequence is 3-demethoxyubiquinol 3-hydroxylase (207 aa).

Residues E56, E86, H89, E138, E170, and H173 each coordinate Fe cation.

The protein belongs to the COQ7 family. Requires Fe cation as cofactor.

It localises to the cell membrane. It carries out the reaction a 5-methoxy-2-methyl-3-(all-trans-polyprenyl)benzene-1,4-diol + AH2 + O2 = a 3-demethylubiquinol + A + H2O. It functions in the pathway cofactor biosynthesis; ubiquinone biosynthesis. Its function is as follows. Catalyzes the hydroxylation of 2-nonaprenyl-3-methyl-6-methoxy-1,4-benzoquinol during ubiquinone biosynthesis. This Cupriavidus taiwanensis (strain DSM 17343 / BCRC 17206 / CCUG 44338 / CIP 107171 / LMG 19424 / R1) (Ralstonia taiwanensis (strain LMG 19424)) protein is 3-demethoxyubiquinol 3-hydroxylase.